A 271-amino-acid polypeptide reads, in one-letter code: Mannosyl-3-phosphoglycerate phosphatase (271 aa).

Asp-13 serves as the catalytic Nucleophile. Mg(2+) contacts are provided by Asp-13, Asp-15, and Asp-214.

This sequence belongs to the HAD-like hydrolase superfamily. MPGP family. Mg(2+) serves as cofactor.

It localises to the cytoplasm. The catalysed reaction is 2-O-(alpha-D-mannosyl)-3-phosphoglycerate + H2O = (2R)-2-O-(alpha-D-mannosyl)-glycerate + phosphate. The chain is Mannosyl-3-phosphoglycerate phosphatase (yedP) from Shigella sonnei (strain Ss046).